We begin with the raw amino-acid sequence, 160 residues long: MFKFLSQMQLTRFFVGFRTVLWYFFAPKVTIKYPQEKGPISLRFRGEHALRRYKNGEERCIACKLCEVVCPAQAITIEAAPRESDGSRRATKYDIDMTKCIYCGFCQEACPVDAIVEGPNFEFARENREDLLYDKKKLLDNGSKWESALIKMLNRNDTTH.

2 4Fe-4S ferredoxin-type domains span residues 51–80 (RRYK…IEAA) and 91–120 (TKYD…EGPN). Cys60, Cys63, Cys66, Cys70, Cys100, Cys103, Cys106, and Cys110 together coordinate [4Fe-4S] cluster.

Belongs to the complex I 23 kDa subunit family. As to quaternary structure, NDH-1 is composed of 14 different subunits. Subunits NuoA, H, J, K, L, M, N constitute the membrane sector of the complex. [4Fe-4S] cluster serves as cofactor.

It is found in the cell inner membrane. The enzyme catalyses a quinone + NADH + 5 H(+)(in) = a quinol + NAD(+) + 4 H(+)(out). Functionally, NDH-1 shuttles electrons from NADH, via FMN and iron-sulfur (Fe-S) centers, to quinones in the respiratory chain. The immediate electron acceptor for the enzyme in this species is believed to be ubiquinone. Couples the redox reaction to proton translocation (for every two electrons transferred, four hydrogen ions are translocated across the cytoplasmic membrane), and thus conserves the redox energy in a proton gradient. This is NADH-quinone oxidoreductase subunit I from Neorickettsia sennetsu (strain ATCC VR-367 / Miyayama) (Ehrlichia sennetsu).